We begin with the raw amino-acid sequence, 252 residues long: UPF0736 protein OB1207 (252 aa).

This sequence belongs to the UPF0736 family.

The sequence is that of UPF0736 protein OB1207 from Oceanobacillus iheyensis (strain DSM 14371 / CIP 107618 / JCM 11309 / KCTC 3954 / HTE831).